The following is an 82-amino-acid chain: Immediate early response 3-interacting protein 1 (82 aa).

2 helical membrane-spanning segments follow: residues alanine 2–leucine 22 and valine 62–glycine 82.

The protein belongs to the YOS1 family.

The protein localises to the endoplasmic reticulum membrane. In terms of biological role, regulator of endoplasmic reticulum secretion that acts as a key determinant of brain size. Required for secretion of extracellular matrix proteins. Required for correct brain development by depositing sufficient extracellular matrix proteins for tissue integrity and the proliferation of neural progenitors. Acts as a regulator of the unfolded protein response (UPR). This chain is Immediate early response 3-interacting protein 1, found in Xenopus laevis (African clawed frog).